Here is a 495-residue protein sequence, read N- to C-terminus: MDIRELIDITELSSIATEGPPPPPPPPLLQPHHSALSSSPLPPPLPPKKLLATTNTPPPPPPPLHSNSQMGAPTSSLVLKSPHNLKGQGQTRKANLKPYHWLKLTRAVQGSLWAEAQKSDEAATAPDFDISEIEKLFSAVNLSSNSENNGGKSGRRARPKVEKVQLIELKRAYNCEIMLSKVKIPLPDLMSSVLALDESVIDVDQVDNLIKFCPTKEEAELLKGFIGNKETLGRCEQFFLELLKVPRVETKLRVFSFKIQFHSQVTDLRRGLNTIHSATNEVRGSTKLKRIMQTILSLGNALNHGTARGSAIGFHLDSLLKLTDTRSRNSKMTLMHYLCKVLAEKLPGLLNFPKDMVSLEAATNIQLKYLAEEMQATSKGLEKVVQEFTASETDCQISKHFHMNLKEFLSVAEGEVRSLASLYSTVGGSADALALYFGEDPARVPFEQVVSTLQNFVRIFVRSHEENCKQVEFEKKRAQKEAENEKLKKGVYNEN.

The segment at 1-92 (MDIRELIDIT…HNLKGQGQTR (92 aa)) is disordered. Residues 19-29 (GPPPPPPPPLL) show a composition bias toward pro residues. Positions 30–39 (QPHHSALSSS) are enriched in low complexity. The region spanning 86–486 (KGQGQTRKAN…RAQKEAENEK (401 aa)) is the FH2 domain.

Belongs to the formin-like family. Class-II subfamily.

The chain is Formin-like protein 17 (FH17) from Arabidopsis thaliana (Mouse-ear cress).